Reading from the N-terminus, the 146-residue chain is Villin-like protein ABP41 (146 aa).

Belongs to the villin/gelsolin family. Binds to actin. In terms of tissue distribution, expressed in pollen (at protein level).

The protein localises to the cytoplasm. It is found in the cytoskeleton. Its function is as follows. Ca(2+)-dependent actin filament-severing protein that is required for pollen tube growth. Probably regulates the dynamics of the actin cytoskeleton. It can promote the assembly of monomers into filaments (nucleation) as well as sever filaments already formed. The polypeptide is Villin-like protein ABP41 (Lilium davidii (David's lily)).